The chain runs to 309 residues: Epidermal retinol dehydrogenase 2 (309 aa).

Residues 11–31 (LLVFLGKSLLSVLEALLFHVI) form a helical membrane-spanning segment. 44–68 (LITGAGSGLGRLLALQFARLGAVLV) is an NADP(+) binding site. Residue S177 participates in substrate binding. The active-site Proton acceptor is Y190. A helical transmembrane segment spans residues 270 to 290 (FLYFIVFLKSILPIKTGILIA).

Belongs to the short-chain dehydrogenases/reductases (SDR) family.

It localises to the endoplasmic reticulum membrane. The catalysed reaction is all-trans-retinol--[retinol-binding protein] + NAD(+) = all-trans-retinal--[retinol-binding protein] + NADH + H(+). The protein operates within cofactor metabolism; retinol metabolism. Its function is as follows. Oxidoreductase with strong preference for NAD. Active in both the oxidative and reductive directions. Oxidizes all-trans-retinol in all-trans-retinaldehyde. No activity was detected with 11-cis-retinol or 11-cis-retinaldehyde as substrates with either NAD(+)/NADH or NADP(+)/NADPH. This chain is Epidermal retinol dehydrogenase 2, found in Mus musculus (Mouse).